A 308-amino-acid chain; its full sequence is Ribonuclease 3 (308 aa).

In terms of domain architecture, RNase III spans 20-145; that stretch reads YLRFYKMLGF…LVGAIYLDRG (126 aa). Glu-62 lines the Mg(2+) pocket. Asp-66 is an active-site residue. Residues Asn-131 and Glu-134 each contribute to the Mg(2+) site. Residue Glu-134 is part of the active site. Positions 173–242 constitute a DRBM domain; sequence NFKSKLIEWS…ARVALGKIKN (70 aa). The segment at 261–281 is disordered; the sequence is QEEVTVSDSKPSDSGAVTPDL.

This sequence belongs to the ribonuclease III family. Homodimer. Requires Mg(2+) as cofactor.

The protein localises to the cytoplasm. The catalysed reaction is Endonucleolytic cleavage to 5'-phosphomonoester.. Its function is as follows. Digests double-stranded RNA. Involved in the processing of primary rRNA transcript to yield the immediate precursors to the large and small rRNAs (23S and 16S). Processes some mRNAs, and tRNAs when they are encoded in the rRNA operon. Processes pre-crRNA and tracrRNA of type II CRISPR loci if present in the organism. In Phocaeicola vulgatus (strain ATCC 8482 / DSM 1447 / JCM 5826 / CCUG 4940 / NBRC 14291 / NCTC 11154) (Bacteroides vulgatus), this protein is Ribonuclease 3.